Here is a 337-residue protein sequence, read N- to C-terminus: MTNLQTFELPTEVIGSAADISLGRALIQAWQKDGILQIKTDSEQNRKTQEAMAASKQFCKEPLTFKSSCVSDLTYSGYVASGEEVTAGKPDFPEIFTVCKDLPVSDQRVKAGWPCHGPVPWPNNTYQKSMKAFMGELGLAGERLLKLTALGFELPINTFTDLTRNGWHHMRVLRFPPQTSTMSSGIGAHTDYGLLVIAAQDDVGGLYIRPPVEGEKRNRNWLPGESSAGMFEHDDPWTYVTPVQNVWTVFPGDILQFMTCGQLLSTPHKVRLNTRERFACAYFHEPNFEACAYQVFEPSGNERIHYGEHFTSMFMRCYPDRITTKRIHKDNRLAHFK.

In terms of domain architecture, Fe2OG dioxygenase spans 166–286; that stretch reads GWHHMRVLRF…RFACAYFHEP (121 aa). 2 residues coordinate Fe cation: histidine 189 and histidine 268.

Belongs to the iron/ascorbate-dependent oxidoreductase family. Monomer. Fe(2+) is required as a cofactor.

The catalysed reaction is 2-oxoglutarate + O2 + 2 H(+) = ethene + 3 CO2 + H2O. The enzyme catalyses L-arginine + 2-oxoglutarate + O2 = guanidine + L-glutamate 5-semialdehyde + succinate + CO2. It functions in the pathway alkene biosynthesis; ethylene biosynthesis via 2-oxoglutarate. Its function is as follows. Simultaneously catalyzes two reactions, namely formation of ethylene and of succinate from 2-oxoglutarate. This chain is 2-oxoglutarate-dependent ethylene/succinate-forming enzyme (efe), found in Pseudomonas syringae pv. pisi.